Reading from the N-terminus, the 199-residue chain is MARCKS-related protein (199 aa).

Positions 1-199 are disordered; that stretch reads MGSQSSKAPR…GPASASAENE (199 aa). Glycine 2 carries N-myristoyl glycine lipidation. At threonine 14 the chain carries Phosphothreonine. Low complexity predominate over residues 16-26; that stretch reads EEAAGASPAKA. Residues serine 22, serine 36, and serine 48 each carry the phosphoserine modification. Low complexity predominate over residues 53 to 64; the sequence is GADEAAGATGDA. Phosphoserine is present on serine 71. Residues 74–85 show a composition bias toward basic and acidic residues; it reads AEAKGEVAPKET. Phosphothreonine is present on threonine 85. The segment covering 86–98 has biased composition (basic residues); sequence PKKKKKFSFKKPF. Residues 87 to 110 are effector domain involved in lipid-binding and calmodulin-binding; it reads KKKKKFSFKKPFKLSGLSFKRNRK. A phosphoserine; by PKC mark is found at serine 93, serine 101, and serine 104. A Phosphoserine modification is found at serine 119. A Phosphoserine; by MAPK8 modification is found at serine 120. Residues serine 132 and serine 135 each carry the phosphoserine modification. At threonine 148 the chain carries Phosphothreonine; by MAPK8. A phosphoserine mark is found at serine 151, serine 162, and serine 165. The segment covering 175 to 199 has biased composition (low complexity); that stretch reads GPQAAEPSTPSGPESGPASASAENE. Threonine 183 bears the Phosphothreonine; by MAPK8 mark.

Belongs to the MARCKS family. Binds to filamentous actin (F-actin), but not to monomeric G-actin, independently of its phosphorylation status. Interacts with calmodulin. Post-translationally, phosphorylated. Phosphorylation at Ser-120 and Thr-183 is non-redundantly catalyzed by MAPK8 in vivo. Phosphorylation at Thr-148 is preferentially catalyzed by MAPK8 in vivo, but this modification can also be catalyzed by other kinases in the absence of MAPK8. May be phosphorylated by protein kinase C, which disrupts the interaction with calmodulin.

It localises to the cytoplasm. The protein resides in the cytoskeleton. It is found in the cell membrane. In terms of biological role, controls cell movement by regulating actin cytoskeleton homeostasis and filopodium and lamellipodium formation. When unphosphorylated, induces cell migration. When phosphorylated by MAPK8, induces actin bundles formation and stabilization, thereby reducing actin plasticity, hence restricting cell movement, including neuronal migration. May be involved in coupling the protein kinase C and calmodulin signal transduction systems. The polypeptide is MARCKS-related protein (Marcksl1) (Rattus norvegicus (Rat)).